Consider the following 151-residue polypeptide: SsrA-binding protein (151 aa).

Belongs to the SmpB family.

Its subcellular location is the cytoplasm. Required for rescue of stalled ribosomes mediated by trans-translation. Binds to transfer-messenger RNA (tmRNA), required for stable association of tmRNA with ribosomes. tmRNA and SmpB together mimic tRNA shape, replacing the anticodon stem-loop with SmpB. tmRNA is encoded by the ssrA gene; the 2 termini fold to resemble tRNA(Ala) and it encodes a 'tag peptide', a short internal open reading frame. During trans-translation Ala-aminoacylated tmRNA acts like a tRNA, entering the A-site of stalled ribosomes, displacing the stalled mRNA. The ribosome then switches to translate the ORF on the tmRNA; the nascent peptide is terminated with the 'tag peptide' encoded by the tmRNA and targeted for degradation. The ribosome is freed to recommence translation, which seems to be the essential function of trans-translation. The chain is SsrA-binding protein from Geotalea uraniireducens (strain Rf4) (Geobacter uraniireducens).